The primary structure comprises 276 residues: Rhomboid protease GlpG (276 aa).

Helical transmembrane passes span 94–114 (GPFT…MNVV), 142–162 (ALMH…WYLG), 169–189 (LGSG…GYVQ), 192–212 (FSGP…GYAW), 229–249 (LITF…GMSI), and 250–270 (ANGA…ADTL). The active-site Nucleophile is S201. H254 is an active-site residue.

It belongs to the peptidase S54 family.

It is found in the cell inner membrane. The enzyme catalyses Cleaves type-1 transmembrane domains using a catalytic dyad composed of serine and histidine that are contributed by different transmembrane domains.. Rhomboid-type serine protease that catalyzes intramembrane proteolysis. This Enterobacter sp. (strain 638) protein is Rhomboid protease GlpG.